Consider the following 429-residue polypeptide: Glutamate-1-semialdehyde 2,1-aminomutase (429 aa).

Lys267 bears the N6-(pyridoxal phosphate)lysine mark.

Belongs to the class-III pyridoxal-phosphate-dependent aminotransferase family. HemL subfamily. Homodimer. The cofactor is pyridoxal 5'-phosphate.

The protein localises to the cytoplasm. The catalysed reaction is (S)-4-amino-5-oxopentanoate = 5-aminolevulinate. It functions in the pathway porphyrin-containing compound metabolism; protoporphyrin-IX biosynthesis; 5-aminolevulinate from L-glutamyl-tRNA(Glu): step 2/2. This is Glutamate-1-semialdehyde 2,1-aminomutase from Xanthomonas oryzae pv. oryzae (strain MAFF 311018).